We begin with the raw amino-acid sequence, 84 residues long: MERGQRKVRIGTVVSNKMQKTIVVAVEDKFRHPLYGKIVKRTKKYKVHDENNICNVGDVVKIMETRPLSKEKRWRLVEVIKKAE.

The protein belongs to the universal ribosomal protein uS17 family. In terms of assembly, part of the 30S ribosomal subunit.

One of the primary rRNA binding proteins, it binds specifically to the 5'-end of 16S ribosomal RNA. This Caldanaerobacter subterraneus subsp. tengcongensis (strain DSM 15242 / JCM 11007 / NBRC 100824 / MB4) (Thermoanaerobacter tengcongensis) protein is Small ribosomal subunit protein uS17.